The primary structure comprises 329 residues: Ornithine carbamoyltransferase (329 aa).

Carbamoyl phosphate contacts are provided by residues Ser51 to Thr54, Gln78, Arg102, and His129 to Gln132. Residues Asn174, Asp238, and Ser242–Met243 each bind L-ornithine. Residues Cys278 to Leu279 and Arg306 each bind carbamoyl phosphate.

Belongs to the aspartate/ornithine carbamoyltransferase superfamily. OTCase family.

Its subcellular location is the cytoplasm. The enzyme catalyses carbamoyl phosphate + L-ornithine = L-citrulline + phosphate + H(+). The protein operates within amino-acid biosynthesis; L-arginine biosynthesis; L-arginine from L-ornithine and carbamoyl phosphate: step 1/3. Its function is as follows. Reversibly catalyzes the transfer of the carbamoyl group from carbamoyl phosphate (CP) to the N(epsilon) atom of ornithine (ORN) to produce L-citrulline. The polypeptide is Ornithine carbamoyltransferase (Helicobacter hepaticus (strain ATCC 51449 / 3B1)).